A 302-amino-acid polypeptide reads, in one-letter code: MLKKLKVVRLLVNHLIYCPSIFMPYSKNMKKKIWNKTSLGALFMLFGTALTACSNSGFEANLTSLNQLRTSASKNTNLTQNKADLVTALKSAFENNPEGTTRVLLDAWKFTLLDAQILEKQDFSKFSKSFGSGRSIEDVEPSAGVRGLRLVERYTQDTANIINNVIKLDKQKVEAFSIQYKDPKNFRVQVKINAKGNYKKDTVKTYLSQVGLSDGDLNDTGTLEAEIIYTYMPPAASFFSASKFDKLTRAINFNTNLRIQIIGKDSVMTKLLQQSSFVKQLADQKFQDQSINLLPYVLYSIL.

The signal sequence occupies residues 1 to 52; it reads MLKKLKVVRLLVNHLIYCPSIFMPYSKNMKKKIWNKTSLGALFMLFGTALTA.

The protein belongs to the MG439/MG440 family.

This is an uncharacterized protein from Mycoplasma pneumoniae (strain ATCC 29342 / M129 / Subtype 1) (Mycoplasmoides pneumoniae).